The sequence spans 533 residues: MTRVLGIEGTAWCASAAVFDAETDAVFIDSDAYVPESGGIHPREAAEHMREAVPSVVEAALDHVESNWGDPADAIDAVAFSRGPGLGPCLRIAGTAARSLAGTLSCPLVGVNHMVAHLEIGRHRSGFESPVCLNASGANAHVLGYHNGRYRVLGETMDTGVGNAIDKFTRHVGWSHPGGPKVESHAEDGDYVELPYVVKGMDFSFSGIMSAAKQAYDDGTPVADVCCGLQETIFAMLAEVSERALSLTGADELVVGGGVAQNSRLQEMLTQMCENRGAAIYVPEPRFLRDNAGMIAVLGAKMYEAGDIISIPESGVRPDFRPDEVPVSWRDDEAVARPVPTDERRQGAEAVVDIDADGGRVTKRRLEKAYRHPVLDSRLRSQRTRSEARLTSEARRQGVPTPVVYDVDPDAGRLVFQYVGDADLKTALSESAVRDVGRHLAACHAAGFVHGDPTPRNVRVGEDRAFLIDFGLGYYTDAVEDYAMDLHVFEGALGGTADDPTAQITAFEDAYRSAGDGAVVDHLREIETRGRYQ.

The interval 1–329 (MTRVLGIEGT…FRPDEVPVSW (329 aa)) is kae1. Positions 113 and 117 each coordinate Fe cation. Residues 134 to 138 (NASGA), D166, G179, E183, and N262 contribute to the L-threonylcarbamoyladenylate site. Position 290 (D290) interacts with Fe cation. The region spanning 338–533 (PVPTDERRQG…REIETRGRYQ (196 aa)) is the Protein kinase domain. ATP is bound by residues 345–352 (RQGAEAVV) and K363. D452 serves as the catalytic Proton acceptor; for kinase activity.

The protein in the N-terminal section; belongs to the KAE1 / TsaD family. It in the C-terminal section; belongs to the protein kinase superfamily. Tyr protein kinase family. BUD32 subfamily. Component of the KEOPS complex that consists of Kae1, Bud32, Cgi121 and Pcc1; the whole complex dimerizes. Fe(2+) is required as a cofactor.

The protein resides in the cytoplasm. It catalyses the reaction L-seryl-[protein] + ATP = O-phospho-L-seryl-[protein] + ADP + H(+). It carries out the reaction L-threonyl-[protein] + ATP = O-phospho-L-threonyl-[protein] + ADP + H(+). The enzyme catalyses L-threonylcarbamoyladenylate + adenosine(37) in tRNA = N(6)-L-threonylcarbamoyladenosine(37) in tRNA + AMP + H(+). In terms of biological role, required for the formation of a threonylcarbamoyl group on adenosine at position 37 (t(6)A37) in tRNAs that read codons beginning with adenine. Is a component of the KEOPS complex that is probably involved in the transfer of the threonylcarbamoyl moiety of threonylcarbamoyl-AMP (TC-AMP) to the N6 group of A37. The Kae1 domain likely plays a direct catalytic role in this reaction. The Bud32 domain probably displays kinase activity that regulates Kae1 function. The protein is Probable bifunctional tRNA threonylcarbamoyladenosine biosynthesis protein of Natronomonas pharaonis (strain ATCC 35678 / DSM 2160 / CIP 103997 / JCM 8858 / NBRC 14720 / NCIMB 2260 / Gabara) (Halobacterium pharaonis).